A 309-amino-acid polypeptide reads, in one-letter code: tRNA uridine(34) hydroxylase (309 aa).

Residues 123-217 (DDPEVIVVDT…YLEEVPEEQT (95 aa)) enclose the Rhodanese domain. The active-site Cysteine persulfide intermediate is the C177.

Belongs to the TrhO family.

The catalysed reaction is uridine(34) in tRNA + AH2 + O2 = 5-hydroxyuridine(34) in tRNA + A + H2O. Catalyzes oxygen-dependent 5-hydroxyuridine (ho5U) modification at position 34 in tRNAs. The polypeptide is tRNA uridine(34) hydroxylase (Saccharophagus degradans (strain 2-40 / ATCC 43961 / DSM 17024)).